Here is a 175-residue protein sequence, read N- to C-terminus: Universal stress protein A-like protein (175 aa).

11 residues coordinate AMP: A11, V12, N13, S26, C27, V53, G131, R133, T145, V146, and S147.

Belongs to the universal stress protein A family. Homohexamer.

The protein is Universal stress protein A-like protein of Arabidopsis thaliana (Mouse-ear cress).